We begin with the raw amino-acid sequence, 183 residues long: Small ribosomal subunit protein uS4 (183 aa).

One can recognise an S4 RNA-binding domain in the interval 106-168; it reads RRLETLVYKK…ETSPFTDENH (63 aa). The disordered stretch occupies residues 158 to 183; the sequence is NETSPFTDENHPLRMEMSGTKEEENE. Basic and acidic residues predominate over residues 165-183; sequence DENHPLRMEMSGTKEEENE.

Belongs to the universal ribosomal protein uS4 family. Part of the 30S ribosomal subunit. Contacts protein S5. The interaction surface between S4 and S5 is involved in control of translational fidelity.

In terms of biological role, one of the primary rRNA binding proteins, it binds directly to 16S rRNA where it nucleates assembly of the body of the 30S subunit. With S5 and S12 plays an important role in translational accuracy. This Picrophilus torridus (strain ATCC 700027 / DSM 9790 / JCM 10055 / NBRC 100828 / KAW 2/3) protein is Small ribosomal subunit protein uS4.